Reading from the N-terminus, the 229-residue chain is MIRAIVTDIEGTTSDIRFVHQVLFPYARERLATFLRLHAEDAEVAAPLTALRQELDQPQADIEQLIAALYRFMDEDRKSTALKALQGIIWRSGYQNGDFRGHLYPEVAGQLAAWQQQGLKLYVYSSGSVEAQKLLFGYSDAGDLQPLFSGYFDTHVGAKRETASYLNIAGKIGIAADELLFLSDIHQELDAARAAGWHTCQLIRDEADSQSQHPQVNRFDQIDLGEFAS.

The protein belongs to the HAD-like hydrolase superfamily. MasA/MtnC family. In terms of assembly, monomer. It depends on Mg(2+) as a cofactor.

It catalyses the reaction 5-methylsulfanyl-2,3-dioxopentyl phosphate + H2O = 1,2-dihydroxy-5-(methylsulfanyl)pent-1-en-3-one + phosphate. The protein operates within amino-acid biosynthesis; L-methionine biosynthesis via salvage pathway; L-methionine from S-methyl-5-thio-alpha-D-ribose 1-phosphate: step 3/6. It functions in the pathway amino-acid biosynthesis; L-methionine biosynthesis via salvage pathway; L-methionine from S-methyl-5-thio-alpha-D-ribose 1-phosphate: step 4/6. Bifunctional enzyme that catalyzes the enolization of 2,3-diketo-5-methylthiopentyl-1-phosphate (DK-MTP-1-P) into the intermediate 2-hydroxy-3-keto-5-methylthiopentenyl-1-phosphate (HK-MTPenyl-1-P), which is then dephosphorylated to form the acireductone 1,2-dihydroxy-3-keto-5-methylthiopentene (DHK-MTPene). This chain is Enolase-phosphatase E1, found in Serratia proteamaculans (strain 568).